The chain runs to 390 residues: Glutamyl-tRNA reductase (390 aa).

Residues 46 to 49 (TCNR), Ser-96, 101 to 103 (EAQ), and Gln-107 contribute to the substrate site. Cys-47 serves as the catalytic Nucleophile. 176-181 (GAGEMA) contacts NADP(+).

It belongs to the glutamyl-tRNA reductase family. As to quaternary structure, homodimer.

It catalyses the reaction (S)-4-amino-5-oxopentanoate + tRNA(Glu) + NADP(+) = L-glutamyl-tRNA(Glu) + NADPH + H(+). Its pathway is porphyrin-containing compound metabolism; protoporphyrin-IX biosynthesis; 5-aminolevulinate from L-glutamyl-tRNA(Glu): step 1/2. Catalyzes the NADPH-dependent reduction of glutamyl-tRNA(Glu) to glutamate 1-semialdehyde (GSA). In Thermus thermophilus (strain ATCC BAA-163 / DSM 7039 / HB27), this protein is Glutamyl-tRNA reductase.